The chain runs to 240 residues: UDP-2,3-diacylglucosamine hydrolase (240 aa).

Positions 7, 9, 40, 78, and 113 each coordinate Mn(2+). 78–79 serves as a coordination point for substrate; sequence NR. 4 residues coordinate substrate: Asp121, Ser159, Lys166, and His194. Mn(2+) contacts are provided by His194 and His196.

The protein belongs to the LpxH family. The cofactor is Mn(2+).

It localises to the cell inner membrane. The enzyme catalyses UDP-2-N,3-O-bis[(3R)-3-hydroxytetradecanoyl]-alpha-D-glucosamine + H2O = 2-N,3-O-bis[(3R)-3-hydroxytetradecanoyl]-alpha-D-glucosaminyl 1-phosphate + UMP + 2 H(+). The protein operates within glycolipid biosynthesis; lipid IV(A) biosynthesis; lipid IV(A) from (3R)-3-hydroxytetradecanoyl-[acyl-carrier-protein] and UDP-N-acetyl-alpha-D-glucosamine: step 4/6. Functionally, hydrolyzes the pyrophosphate bond of UDP-2,3-diacylglucosamine to yield 2,3-diacylglucosamine 1-phosphate (lipid X) and UMP by catalyzing the attack of water at the alpha-P atom. Involved in the biosynthesis of lipid A, a phosphorylated glycolipid that anchors the lipopolysaccharide to the outer membrane of the cell. The protein is UDP-2,3-diacylglucosamine hydrolase of Pseudomonas putida (strain ATCC 700007 / DSM 6899 / JCM 31910 / BCRC 17059 / LMG 24140 / F1).